We begin with the raw amino-acid sequence, 301 residues long: Ribonuclease Z (301 aa).

Zn(2+)-binding residues include His63, His65, Asp67, His68, His141, Asp204, and His262. Asp67 functions as the Proton acceptor in the catalytic mechanism.

The protein belongs to the RNase Z family. As to quaternary structure, homodimer. Requires Zn(2+) as cofactor.

The enzyme catalyses Endonucleolytic cleavage of RNA, removing extra 3' nucleotides from tRNA precursor, generating 3' termini of tRNAs. A 3'-hydroxy group is left at the tRNA terminus and a 5'-phosphoryl group is left at the trailer molecule.. Zinc phosphodiesterase, which displays some tRNA 3'-processing endonuclease activity. Probably involved in tRNA maturation, by removing a 3'-trailer from precursor tRNA. This is Ribonuclease Z from Streptomyces coelicolor (strain ATCC BAA-471 / A3(2) / M145).